The chain runs to 385 residues: Acetylornithine aminotransferase (385 aa).

Pyridoxal 5'-phosphate contacts are provided by residues 95-96 and Phe-122; that span reads GA. Arg-125 lines the N(2)-acetyl-L-ornithine pocket. A pyridoxal 5'-phosphate-binding site is contributed by 208–211; sequence DEIQ. Residue Lys-237 is modified to N6-(pyridoxal phosphate)lysine. Residue Thr-265 coordinates N(2)-acetyl-L-ornithine. Residue Thr-266 coordinates pyridoxal 5'-phosphate.

The protein belongs to the class-III pyridoxal-phosphate-dependent aminotransferase family. ArgD subfamily. As to quaternary structure, homodimer. Requires pyridoxal 5'-phosphate as cofactor.

It is found in the cytoplasm. The catalysed reaction is N(2)-acetyl-L-ornithine + 2-oxoglutarate = N-acetyl-L-glutamate 5-semialdehyde + L-glutamate. It functions in the pathway amino-acid biosynthesis; L-arginine biosynthesis; N(2)-acetyl-L-ornithine from L-glutamate: step 4/4. In Bacillus subtilis (strain 168), this protein is Acetylornithine aminotransferase.